A 301-amino-acid polypeptide reads, in one-letter code: uncharacterized protein (301 aa).

Positions 1 to 26 are cleaved as a signal peptide; that stretch reads MKGFSCSRPGYLTGLLLLAVAPILTA. The N-palmitoyl cysteine moiety is linked to residue Cys-27. A lipid anchor (S-diacylglycerol cysteine) is attached at Cys-27. The TNase-like domain occupies 46–243; the sequence is KLKPATIEYW…YNAKINIWSH (198 aa). The disordered stretch occupies residues 64-136; sequence NYASEERRKE…SKGDSTGDEK (73 aa). 2 stretches are compositionally biased toward basic and acidic residues: residues 67-95 and 120-136; these read SEER…KTED and TPEK…GDEK.

The protein resides in the cell membrane. This is an uncharacterized protein from Mycoplasma pneumoniae (strain ATCC 29342 / M129 / Subtype 1) (Mycoplasmoides pneumoniae).